A 241-amino-acid chain; its full sequence is HTH-type quorum-sensing regulator RhlR (241 aa).

The HTH luxR-type domain occupies 174-239 (LMSNPVCLSH…LAAAYAAALG (66 aa)). Positions 198 to 217 (SGEIAIILSISESTVNFHHK) form a DNA-binding region, H-T-H motif.

Belongs to the autoinducer-regulated transcriptional regulatory protein family. As to quaternary structure, homodimer in the absence of any acyl-L-homoserine lactone. The presence of the autoinducer C4-HSL has no significant effect on dimerization whereas N-(3-oxododecanoyl)-L-homoserine lactone (3O-C12-HSL), the LasR inducer, is able to dissociate the RhlR homodimers into monomers.

Its subcellular location is the cytoplasm. Activated by interaction with the autoinducer signal molecule N-butanoyl-L-homoserine lactone (C4-HSL or BHL), the product of the RhlI synthase. Is also activated by binding to rosmarinic acid (RA), a homoserine lactone mimic produced by plants, which induces a broad quorum sensing response, including the induction of all major quorum sensing controlled virulence factors. Rosmarinic acid secretion may be a plant defense mechanism to stimulate a premature quorum sensing response. In terms of biological role, quorum-sensing regulator that controls the expression of multiple virulence factors in response to extracellular signaling molecules called autoinducers. Involved, among others, in the transcriptional regulation of genes that are responsible for rhamnolipid surfactant biosynthesis. Acts by binding to a specific sequence in the rhlAB regulatory region, both in the presence and in the absence of its autoinducer. In the former case it activates transcription of the promoter, whereas in the latter it acts as a transcriptional repressor. Also regulates the expression of the rmlBDAC operon, encoding dTDP-L-rhamnose biosynthetic enzymes, by binding to the rml box in the promoter region. In addition, is involved in the regulation of the production of elastase (lasB) and pyocyanine. This Pseudomonas aeruginosa (strain ATCC 15692 / DSM 22644 / CIP 104116 / JCM 14847 / LMG 12228 / 1C / PRS 101 / PAO1) protein is HTH-type quorum-sensing regulator RhlR.